The following is a 96-amino-acid chain: ATP-dependent Clp protease adapter protein ClpS (96 aa).

This sequence belongs to the ClpS family. In terms of assembly, binds to the N-terminal domain of the chaperone ClpA.

In terms of biological role, involved in the modulation of the specificity of the ClpAP-mediated ATP-dependent protein degradation. The polypeptide is ATP-dependent Clp protease adapter protein ClpS (Streptomyces coelicolor (strain ATCC BAA-471 / A3(2) / M145)).